Reading from the N-terminus, the 101-residue chain is AFA-III adhesin operon regulatory protein (101 aa).

In terms of biological role, regulates the transcription of genes involved in the biosynthesis of afimbrial adhesin-III. This chain is AFA-III adhesin operon regulatory protein (afaA), found in Escherichia coli.